A 326-amino-acid polypeptide reads, in one-letter code: 4-hydroxy-3-methylbut-2-enyl diphosphate reductase 1 (326 aa).

Residue Cys27 participates in [4Fe-4S] cluster binding. His56 and His89 together coordinate (2E)-4-hydroxy-3-methylbut-2-enyl diphosphate. 2 residues coordinate dimethylallyl diphosphate: His56 and His89. 2 residues coordinate isopentenyl diphosphate: His56 and His89. Cys111 is a [4Fe-4S] cluster binding site. His139 lines the (2E)-4-hydroxy-3-methylbut-2-enyl diphosphate pocket. His139 provides a ligand contact to dimethylallyl diphosphate. Residue His139 coordinates isopentenyl diphosphate. Glu141 (proton donor) is an active-site residue. A (2E)-4-hydroxy-3-methylbut-2-enyl diphosphate-binding site is contributed by Thr179. Position 209 (Cys209) interacts with [4Fe-4S] cluster. (2E)-4-hydroxy-3-methylbut-2-enyl diphosphate-binding residues include Ser237, Ser238, Asn239, and Ser281. Dimethylallyl diphosphate contacts are provided by Ser237, Ser238, Asn239, and Ser281. Isopentenyl diphosphate contacts are provided by Ser237, Ser238, Asn239, and Ser281.

This sequence belongs to the IspH family. [4Fe-4S] cluster serves as cofactor.

The catalysed reaction is isopentenyl diphosphate + 2 oxidized [2Fe-2S]-[ferredoxin] + H2O = (2E)-4-hydroxy-3-methylbut-2-enyl diphosphate + 2 reduced [2Fe-2S]-[ferredoxin] + 2 H(+). It carries out the reaction dimethylallyl diphosphate + 2 oxidized [2Fe-2S]-[ferredoxin] + H2O = (2E)-4-hydroxy-3-methylbut-2-enyl diphosphate + 2 reduced [2Fe-2S]-[ferredoxin] + 2 H(+). Its pathway is isoprenoid biosynthesis; dimethylallyl diphosphate biosynthesis; dimethylallyl diphosphate from (2E)-4-hydroxy-3-methylbutenyl diphosphate: step 1/1. The protein operates within isoprenoid biosynthesis; isopentenyl diphosphate biosynthesis via DXP pathway; isopentenyl diphosphate from 1-deoxy-D-xylulose 5-phosphate: step 6/6. Catalyzes the conversion of 1-hydroxy-2-methyl-2-(E)-butenyl 4-diphosphate (HMBPP) into a mixture of isopentenyl diphosphate (IPP) and dimethylallyl diphosphate (DMAPP). Acts in the terminal step of the DOXP/MEP pathway for isoprenoid precursor biosynthesis. This Burkholderia pseudomallei (strain K96243) protein is 4-hydroxy-3-methylbut-2-enyl diphosphate reductase 1.